The following is a 400-amino-acid chain: Serpin E3 (400 aa).

The N-terminal stretch at Met1–Ala19 is a signal peptide. The N-linked (GlcNAc...) asparagine glycan is linked to Asn46.

Belongs to the serpin family.

The protein localises to the secreted. Its function is as follows. Probable serine protease inhibitor. The sequence is that of Serpin E3 (SERPINE3) from Bos taurus (Bovine).